Here is a 475-residue protein sequence, read N- to C-terminus: ATP synthase subunit beta (475 aa).

152-159 (GGAGVGKT) is an ATP binding site.

The protein belongs to the ATPase alpha/beta chains family. In terms of assembly, F-type ATPases have 2 components, CF(1) - the catalytic core - and CF(0) - the membrane proton channel. CF(1) has five subunits: alpha(3), beta(3), gamma(1), delta(1), epsilon(1). CF(0) has three main subunits: a(1), b(2) and c(9-12). The alpha and beta chains form an alternating ring which encloses part of the gamma chain. CF(1) is attached to CF(0) by a central stalk formed by the gamma and epsilon chains, while a peripheral stalk is formed by the delta and b chains.

Its subcellular location is the cell membrane. It catalyses the reaction ATP + H2O + 4 H(+)(in) = ADP + phosphate + 5 H(+)(out). Produces ATP from ADP in the presence of a proton gradient across the membrane. The catalytic sites are hosted primarily by the beta subunits. The protein is ATP synthase subunit beta of Wolbachia pipientis wMel.